Consider the following 113-residue polypeptide: Ig heavy chain V-III region ABE-47N (113 aa).

The Ig-like domain occupies 1-113; that stretch reads EVKLEESGGG…YWGQGTLVTV (113 aa). Cys22 and Cys98 are disulfide-bonded.

This Mus musculus (Mouse) protein is Ig heavy chain V-III region ABE-47N.